Consider the following 345-residue polypeptide: Aspartate-semialdehyde dehydrogenase (345 aa).

NADP(+) contacts are provided by residues 11–14 (TGQV) and 39–40 (RS). R99 contacts phosphate. C130 functions as the Acyl-thioester intermediate in the catalytic mechanism. Q157 serves as a coordination point for substrate. Residue 160 to 161 (SG) participates in NADP(+) binding. K227 serves as a coordination point for phosphate. Residue R249 participates in substrate binding. H256 functions as the Proton acceptor in the catalytic mechanism. N325 provides a ligand contact to NADP(+).

Belongs to the aspartate-semialdehyde dehydrogenase family. Homodimer.

The enzyme catalyses L-aspartate 4-semialdehyde + phosphate + NADP(+) = 4-phospho-L-aspartate + NADPH + H(+). Its pathway is amino-acid biosynthesis; L-lysine biosynthesis via DAP pathway; (S)-tetrahydrodipicolinate from L-aspartate: step 2/4. It participates in amino-acid biosynthesis; L-methionine biosynthesis via de novo pathway; L-homoserine from L-aspartate: step 2/3. It functions in the pathway amino-acid biosynthesis; L-threonine biosynthesis; L-threonine from L-aspartate: step 2/5. In terms of biological role, catalyzes the NADPH-dependent formation of L-aspartate-semialdehyde (L-ASA) by the reductive dephosphorylation of L-aspartyl-4-phosphate. This chain is Aspartate-semialdehyde dehydrogenase, found in Mycobacterium bovis (strain ATCC BAA-935 / AF2122/97).